Consider the following 249-residue polypeptide: 14-3-3-like protein D (249 aa).

It belongs to the 14-3-3 family.

The chain is 14-3-3-like protein D from Nicotiana tabacum (Common tobacco).